The sequence spans 606 residues: NADH-ubiquinone oxidoreductase chain 5 (606 aa).

A run of 16 helical transmembrane segments spans residues 1–21 (MNLF…PIMV), 35–55 (YVKN…MMYL), 87–107 (LMFM…SMWY), 114–134 (INQF…LVTA), 140–160 (LFIG…WWFG), 171–191 (AILY…WFLS), 211–233 (FPLM…HPWL), 241–261 (TPVS…FLLV), 272–292 (LIQT…AICA), 301–320 (IIAF…IGLN), 325–347 (AFLH…GSII), 366–386 (LPFT…MPFL), 413–433 (LTAT…ALLG), 457–477 (LLIG…PVIT), 482–502 (MPLH…IIAF), and 582–602 (GLIK…MILF).

Belongs to the complex I subunit 5 family. As to quaternary structure, core subunit of respiratory chain NADH dehydrogenase (Complex I) which is composed of 45 different subunits.

It is found in the mitochondrion inner membrane. It catalyses the reaction a ubiquinone + NADH + 5 H(+)(in) = a ubiquinol + NAD(+) + 4 H(+)(out). Functionally, core subunit of the mitochondrial membrane respiratory chain NADH dehydrogenase (Complex I) which catalyzes electron transfer from NADH through the respiratory chain, using ubiquinone as an electron acceptor. Essential for the catalytic activity and assembly of complex I. The protein is NADH-ubiquinone oxidoreductase chain 5 (MT-ND5) of Balaenoptera musculus (Blue whale).